The chain runs to 525 residues: Glutamyl-tRNA(Gln) amidotransferase subunit A, mitochondrial (525 aa).

Residues lysine 76 and serine 168 each act as charge relay system in the active site. Catalysis depends on serine 192, which acts as the Acyl-ester intermediate.

It belongs to the amidase family. GatA subfamily. In terms of assembly, subunit of the heterotrimeric GatCAB amidotransferase (AdT) complex, composed of A (QRSL1), B (GATB) and C (GATC) subunits.

The protein resides in the mitochondrion. It carries out the reaction L-glutamyl-tRNA(Gln) + L-glutamine + ATP + H2O = L-glutaminyl-tRNA(Gln) + L-glutamate + ADP + phosphate + H(+). Allows the formation of correctly charged Gln-tRNA(Gln) through the transamidation of misacylated Glu-tRNA(Gln) in the mitochondria. The reaction takes place in the presence of glutamine and ATP through an activated gamma-phospho-Glu-tRNA(Gln). The sequence is that of Glutamyl-tRNA(Gln) amidotransferase subunit A, mitochondrial (Qrsl1) from Rattus norvegicus (Rat).